Reading from the N-terminus, the 677-residue chain is MINDKLPKIWHGGDYNPEQWDSKEIWDEDVRMFKLAGIDVATLNVFSWALNQPNEDTYNFDWLDEKINRLYENGIYTCLATSTAAHPAWMAKKYPDVLRVDFYGRKRKFGSRHNSCPNSPTYRKYSERIAETLAERYKDHPAVLIWHVSNEYGGYCYCDNCQDAFRNWLSDKYGTLEKLNKAWNTGFWGHTFYEWDEIVAPNMLSEKREDNVSDFQGISLDYRRFQSDRLLDCYKLEYNAIRKHVPTSIPITTNLMGTYPMLDYFKWAKEMDVVSWDNYPSIDTPFSYTAMTHDLMRGLKGGKPFMLMEQTPSQQNWQPYNSLKRPGVMRLWSYQAIGRGADTILYFQLRRSVGACEKYHGAVIEHVGHEHTRVFNEVAQLGQELNGLSDTLLDARVNAKVAIVFDWENRWATELSSGPSVSLDYVNEVHKYYDALYKLNVQVDMIGVEEDLSKYDVVIAPVLYMVKEGYAAKVEKFVENGGTFLTTFFSGIVNETDIVTLGGYPGELRKVLGIWAEEIDALHPDETNQIVVKGSRGILSGKYSCNLLFDLIHTEGAEAVAEYGSDFYKGMPVLTVNKFGKGKAWYVASSPDAEFLVDFLQTVCEEAGVEPLLDVPAGVETTERVKDGQTYLFVLNHNNDEVTIELHGSQYREVLTDEQVSGNLVLKEKGVLILAKV.

R112 contributes to the substrate binding site. C116 is a binding site for Zn(2+). Position 150 (N150) interacts with substrate. E151 acts as the Proton donor in catalysis. Zn(2+) is bound by residues C156, C158, and C161. The active-site Nucleophile is the E309. Substrate-binding positions include W317 and 357–360; that span reads EKYH.

The protein belongs to the glycosyl hydrolase 42 family. In terms of assembly, dimer.

It catalyses the reaction Hydrolysis of terminal non-reducing beta-D-galactose residues in beta-D-galactosides.. With respect to regulation, no activity is lost during treatment with 20 or 100 mM EDTA in Z buffer for 3 hours at 0 degrees Celsius, nor is activity greatly stimulated by the addition of cations. Inhibited by 1 mM zinc and 1 mM copper, the levels of activity decrease to 10% of the untreated control. Nickel, cobalt and manganese at concentrations of 10 mM decrease enzyme activity to either 40% (for nickel and cobalt) or 60% (for manganese) of the activity in untreated controls. No change in enzyme activity in the presence of calcium and magnesium at concentrations up to 50 mM. EDTA-treated enzyme exhibits a slight increase in relative specific activity when it is assayed in the presence of 50 mM NaCl or 50 mM KCl, it does not exhibit enhanced activity at concentrations greater than 250 mM. Maintains between 20 and 40% of activity in the presence of 4 M NaCl or 4 M KCl, and it is more active in the presence of KCl than in the presence of NaCl. Retains 50% of activity in the presence of 3 M KCl or 2.5 M NaCl. Its function is as follows. Hydrolyzes o-nitrophenyl-beta-D-galactopyranoside (ONPG), p-nitrophenyl-beta-D-galactopyranoside (PNPG), 5-bromo-4-chloro-3-indoyl-beta-D-galactosde (X-gal), o-nitrophenyl-beta-D-fucopyranoside (ONPF) and p-nitrophenyl-beta-D-fucopyranoside (PNPF) with greatest activity towards ONPG and PNPG and low levels of activity with ONPF and PNPF. Detectable, but very low levels of activity towards p-nitrophenyl-beta-lactose (PNPL), p-nitrophenyl-beta-cellobiose (PNPC), p-nitrophenyl-alpha-galactopyranoside (PNP-alpha-G), and p-nitrophenyl-beta-xylopyranoside (PNPX). This is Beta-galactosidase BgaA from Planococcus sp. (strain 'SOS Orange').